A 262-amino-acid chain; its full sequence is Cytochrome c oxidase subunit 2 (262 aa).

2 consecutive transmembrane segments (helical) span residues 31 to 51 and 72 to 92; these read HIMF…YVII and IIWT…SFIL. Positions 175, 210, 212, 214, 218, and 221 each coordinate Cu cation. Glu-212 is a Mg(2+) binding site.

Belongs to the cytochrome c oxidase subunit 2 family. Component of the cytochrome c oxidase (complex IV, CIV), a multisubunit enzyme composed of a catalytic core of 3 subunits and several supernumerary subunits. The complex exists as a monomer or a dimer and forms supercomplexes (SCs) in the inner mitochondrial membrane with ubiquinol-cytochrome c oxidoreductase (cytochrome b-c1 complex, complex III, CIII). Requires Cu cation as cofactor.

The protein resides in the mitochondrion inner membrane. It catalyses the reaction 4 Fe(II)-[cytochrome c] + O2 + 8 H(+)(in) = 4 Fe(III)-[cytochrome c] + 2 H2O + 4 H(+)(out). Component of the cytochrome c oxidase, the last enzyme in the mitochondrial electron transport chain which drives oxidative phosphorylation. The respiratory chain contains 3 multisubunit complexes succinate dehydrogenase (complex II, CII), ubiquinol-cytochrome c oxidoreductase (cytochrome b-c1 complex, complex III, CIII) and cytochrome c oxidase (complex IV, CIV), that cooperate to transfer electrons derived from NADH and succinate to molecular oxygen, creating an electrochemical gradient over the inner membrane that drives transmembrane transport and the ATP synthase. Cytochrome c oxidase is the component of the respiratory chain that catalyzes the reduction of oxygen to water. Electrons originating from reduced cytochrome c in the intermembrane space (IMS) are transferred via the dinuclear copper A center (CU(A)) of subunit 2 and heme A of subunit 1 to the active site in subunit 1, a binuclear center (BNC) formed by heme A3 and copper B (CU(B)). The BNC reduces molecular oxygen to 2 water molecules using 4 electrons from cytochrome c in the IMS and 4 protons from the mitochondrial matrix. The polypeptide is Cytochrome c oxidase subunit 2 (COX2) (Candida albicans (strain SC5314 / ATCC MYA-2876) (Yeast)).